The following is a 349-amino-acid chain: Anthranilate phosphoribosyltransferase (349 aa).

5-phospho-alpha-D-ribose 1-diphosphate is bound by residues Gly-86, 89–90 (GD), Thr-94, 96–99 (NIST), 114–122 (KHGNKSASG), and Ser-126. Gly-86 serves as a coordination point for anthranilate. Ser-98 contacts Mg(2+). Asn-117 serves as a coordination point for anthranilate. Arg-172 contributes to the anthranilate binding site. 2 residues coordinate Mg(2+): Asp-231 and Glu-232.

It belongs to the anthranilate phosphoribosyltransferase family. As to quaternary structure, homodimer. Mg(2+) is required as a cofactor.

It carries out the reaction N-(5-phospho-beta-D-ribosyl)anthranilate + diphosphate = 5-phospho-alpha-D-ribose 1-diphosphate + anthranilate. Its pathway is amino-acid biosynthesis; L-tryptophan biosynthesis; L-tryptophan from chorismate: step 2/5. Catalyzes the transfer of the phosphoribosyl group of 5-phosphorylribose-1-pyrophosphate (PRPP) to anthranilate to yield N-(5'-phosphoribosyl)-anthranilate (PRA). This is Anthranilate phosphoribosyltransferase from Prochlorococcus marinus (strain MIT 9312).